The sequence spans 715 residues: MMIENLLIELLTEELPPKSLDKLGNAFAAVIADSLKSQNLTTPDTILTAFASPRRLAVHLTAIPAQAPDQVVALKLMPITVGLDAQGQPTPALHKKLAALGMENVDASALKRVQESKAEMLFLEQNVTGILLAAGLQKAMEDAIRQLPVSKVMTYQLDDGWENVHFVRPVHGLIALHGQKIIPVSAFGLTAGNTTRGHRFEVKQTELIIDHADRYASLLETEGAVIPGFDRRRSWIREGLEAAASAVQLRCISDEVLLDEVTALVEYPNILMGAFPTDFLEVPQECLISTMKINQKYFPLLDTDGKLTNQFLIVANITPADPGQIISGNERVIRSRLADAKFFFDHDRKRTLASRLPDLDKVIYHHQLGSQGERTRYVQTLARIIGRLLGDDNLAGQADQAAMLAKADLLTDMVGEFPELQGIMGRYYARFEGMDETIAFAIEDHYKPRFAGDVLPRSMAGICVALADKLETLISLFSIGQLPTGDKDPYALRRHALGVIRILIEKNLPIGLDVLISRAADVLQDEMIGKQDSGPGHARPVTPQLVGQLQDFFYDRLAASLRDQGYTAQEVEAVLNLRPSLLCEIPRRLAAVRAFAALPEAASLAAANKRVGNILKKSECDATVAIDEACLQASAEITLYRALSEIESDARQAFQNGDYVTALQILAALKAPVDAFFDQVMVNDENEALRRNRLALLMALQATMNRVADISRLAA.

This sequence belongs to the class-II aminoacyl-tRNA synthetase family. Tetramer of two alpha and two beta subunits.

It localises to the cytoplasm. It catalyses the reaction tRNA(Gly) + glycine + ATP = glycyl-tRNA(Gly) + AMP + diphosphate. The polypeptide is Glycine--tRNA ligase beta subunit (Nitrosomonas europaea (strain ATCC 19718 / CIP 103999 / KCTC 2705 / NBRC 14298)).